The primary structure comprises 209 residues: MGKFQVISHPLIQHKLSILRREDTSTKDFRELVNEIAMLMGYEVSRDLPLEEVEIQTPIIKTVQKQLSGKKLAIVPILRAGIGMVDGFLSLVPAAKVGHIGMYRDEETLEPVEYLVKLPEDIDQRQIFVMDPMLATGGSAILAVDSLKKRGAANIKFVCLVAAPEGVKKLQDAHPDIDIYTASLDERLNENGYIVPGLGDAGDRLFGTK.

5-phospho-alpha-D-ribose 1-diphosphate is bound by residues Arg-79, Arg-104, and 131 to 139 (DPMLATGGS). Residues Ile-194 and 199–201 (GDA) contribute to the uracil site. Asp-200 contributes to the 5-phospho-alpha-D-ribose 1-diphosphate binding site.

The protein belongs to the UPRTase family. It depends on Mg(2+) as a cofactor.

The enzyme catalyses UMP + diphosphate = 5-phospho-alpha-D-ribose 1-diphosphate + uracil. It participates in pyrimidine metabolism; UMP biosynthesis via salvage pathway; UMP from uracil: step 1/1. With respect to regulation, allosterically activated by GTP. Catalyzes the conversion of uracil and 5-phospho-alpha-D-ribose 1-diphosphate (PRPP) to UMP and diphosphate. The protein is Uracil phosphoribosyltransferase of Streptococcus thermophilus (strain CNRZ 1066).